Consider the following 375-residue polypeptide: Succinyl-diaminopimelate desuccinylase (375 aa).

Residue His-66 participates in Zn(2+) binding. Residue Asp-68 is part of the active site. Asp-99 provides a ligand contact to Zn(2+). The active-site Proton acceptor is Glu-133. The Zn(2+) site is built by Glu-134, Glu-162, and His-348.

It belongs to the peptidase M20A family. DapE subfamily. In terms of assembly, homodimer. Zn(2+) is required as a cofactor. It depends on Co(2+) as a cofactor.

It carries out the reaction N-succinyl-(2S,6S)-2,6-diaminopimelate + H2O = (2S,6S)-2,6-diaminopimelate + succinate. Its pathway is amino-acid biosynthesis; L-lysine biosynthesis via DAP pathway; LL-2,6-diaminopimelate from (S)-tetrahydrodipicolinate (succinylase route): step 3/3. In terms of biological role, catalyzes the hydrolysis of N-succinyl-L,L-diaminopimelic acid (SDAP), forming succinate and LL-2,6-diaminopimelate (DAP), an intermediate involved in the bacterial biosynthesis of lysine and meso-diaminopimelic acid, an essential component of bacterial cell walls. The polypeptide is Succinyl-diaminopimelate desuccinylase (Cronobacter sakazakii (strain ATCC BAA-894) (Enterobacter sakazakii)).